A 248-amino-acid polypeptide reads, in one-letter code: 14-3-3 protein zeta (248 aa).

This sequence belongs to the 14-3-3 family. As to quaternary structure, homodimer; homodimerization is not essential for modulating the activity of Slo. Interacts with phosphorylated Slob; the interaction with Slob mediates an indirect interaction with Slo. Interacts with phosphorylated yki. Interacts with hemo; this represses 14-3-3zeta activity which prevents the 14-3-3zeta-mediated activation of phosphoinositide 3-kinase Pi3K68D. This, in turn, inhibits the Pi3K68D-mediated conversion of phosphatidylinositol to phosphatidylinositol-3-phosphate and prevents progression of early endosomes through the maturation process which regulates subsequent steps of phagocytic processing. Interacts with REPTOR (when phosphorylated), this interaction may assist the cytoplasmic retention of REPTOR. As to expression, predominantly expressed in the ventral nerve cord of the embryo, and in the neural tissues of the head. Also found in the region posterior to the morphogenetic furrow of the eye imaginal disk where cells differentiate as photoreceptors.

It is found in the cytoplasm. Its subcellular location is the early endosome. Functionally, required in Raf-dependent cell proliferation and photoreceptor differentiation during eye development. Acts upstream of Raf and downstream of Ras, and is essential for viability. Acts as a negative regulator of the slo calcium channel via its interaction with slo-binding protein slob. Inhibits yki activity by restricting its nuclear localization. Binds to and promotes the activity of phosphoinositide 3-kinase Pi3K68D which converts phosphatidylinositol to phosphatidylinositol-3-phosphate and promotes maturation of early endosomes. This Drosophila melanogaster (Fruit fly) protein is 14-3-3 protein zeta (14-3-3zeta).